The chain runs to 454 residues: Putative serine carboxypeptidase-like 23 (454 aa).

The N-terminal stretch at 1–22 (MARIHLIIILLVISSTSSSSSS) is a signal peptide. Asn52, Asn102, and Asn136 each carry an N-linked (GlcNAc...) asparagine glycan. 3 cysteine pairs are disulfide-bonded: Cys85/Cys338, Cys247/Cys258, and Cys282/Cys306. Ser178 is an active-site residue. 2 N-linked (GlcNAc...) asparagine glycosylation sites follow: Asn287 and Asn327. Catalysis depends on residues Asp375 and His427.

Belongs to the peptidase S10 family. Expression not detected.

Its subcellular location is the secreted. In terms of biological role, probable carboxypeptidase. The chain is Putative serine carboxypeptidase-like 23 (SCPL23) from Arabidopsis thaliana (Mouse-ear cress).